The chain runs to 551 residues: ATP synthase subunit alpha, mitochondrial (551 aa).

210–217 (GDRQTGKT) is a binding site for ATP.

This sequence belongs to the ATPase alpha/beta chains family. In terms of assembly, F-type ATPases have 2 components, CF(1) - the catalytic core - and CF(0) - the membrane proton channel. CF(1) has five subunits: alpha(3), beta(3), gamma(1), delta(1), epsilon(1). CF(0) has three main subunits: a, b and c.

It is found in the mitochondrion. The protein resides in the mitochondrion inner membrane. Its function is as follows. Mitochondrial membrane ATP synthase (F(1)F(0) ATP synthase or Complex V) produces ATP from ADP in the presence of a proton gradient across the membrane which is generated by electron transport complexes of the respiratory chain. F-type ATPases consist of two structural domains, F(1) - containing the extramembraneous catalytic core, and F(0) - containing the membrane proton channel, linked together by a central stalk and a peripheral stalk. During catalysis, ATP synthesis in the catalytic domain of F(1) is coupled via a rotary mechanism of the central stalk subunits to proton translocation. Subunits alpha and beta form the catalytic core in F(1). Rotation of the central stalk against the surrounding alpha(3)beta(3) subunits leads to hydrolysis of ATP in three separate catalytic sites on the beta subunits. Subunit alpha does not bear the catalytic high-affinity ATP-binding sites. The protein is ATP synthase subunit alpha, mitochondrial (atp-1) of Neurospora crassa (strain ATCC 24698 / 74-OR23-1A / CBS 708.71 / DSM 1257 / FGSC 987).